The sequence spans 984 residues: Glutamate [NMDA] receptor subunit 1 (984 aa).

A signal peptide spans 1-24; that stretch reads MAAAFAYRWLLCAAGIVNVLPIGA. The Extracellular portion of the chain corresponds to 25-570; that stretch reads QRHTASDNPS…TLVSFLQPFS (546 aa). Asn-255, Asn-311, Asn-342, Asn-394, Asn-451, Asn-478, and Asn-498 each carry an N-linked (GlcNAc...) asparagine glycan. Glycine-binding positions include 527–529 and Arg-534; that span reads PLT. The chain crosses the membrane as a helical span at residues 571–591; sequence NTLWILVMVSVHVVALVLYLL. Topologically, residues 592–648 are cytoplasmic; it reads DRFSPFGRFKLSHSDSNEEKALNLSSAVWFAWGVLLNSGIGEGTPRSFSARVLGMVW. A helical membrane pass occupies residues 649 to 669; it reads AGFAMIIVASYTANLAAFLVL. Over 670–828 the chain is Extracellular; sequence ERPKTKLSGI…KTPNTLGLKN (159 aa). Asn-690 is a glycosylation site (N-linked (GlcNAc...) asparagine). Positions 700 and 744 each coordinate glycine. The helical transmembrane segment at 829 to 849 threads the bilayer; it reads MAGVFILVGVGIAGGVGLIII. Residues 850–984 lie on the Cytoplasmic side of the membrane; the sequence is EVIYKKHQVK…YTSDVSHLVV (135 aa). The interval 947-984 is disordered; that stretch reads KSGLVPPALGLGKTRPQQNPLPPRYSPGYTSDVSHLVV. Positions 974–984 are enriched in polar residues; that stretch reads GYTSDVSHLVV.

This sequence belongs to the glutamate-gated ion channel (TC 1.A.10.1) family. As to quaternary structure, forms a heteromeric NMDA channel with Nmdar2.

The protein resides in the cell membrane. Its subcellular location is the postsynaptic cell membrane. The protein localises to the postsynaptic density. NMDA receptor subtype of glutamate-gated ion channels with high calcium permeability and voltage-dependent sensitivity to magnesium. Mediated by glycine. This protein plays a key role in synaptic plasticity, synaptogenesis, excitotoxicity, memory acquisition and learning. It mediates neuronal functions in glutamate neurotransmission. Is involved in the cell surface targeting of NMDA receptors. Plays a role in associative learning and in long-term memory consolidation. In Drosophila virilis (Fruit fly), this protein is Glutamate [NMDA] receptor subunit 1.